The primary structure comprises 96 residues: MIMILYWSLPMILFILGLFCFVSNRKHLLSMLLSLEFIVLMLFFMLFIYLNMLNYESYFSMMFLTFSVCEGALGLSILVSMIRTHGNDYFQSFSIM.

3 helical membrane-spanning segments follow: residues 2-22 (IMILYWSLPMILFILGLFCFV), 28-48 (LLSMLLSLEFIVLMLFFMLFI), and 62-82 (MFLTFSVCEGALGLSILVSMI).

The protein belongs to the complex I subunit 4L family.

The protein localises to the mitochondrion membrane. It carries out the reaction a ubiquinone + NADH + 5 H(+)(in) = a ubiquinol + NAD(+) + 4 H(+)(out). In terms of biological role, core subunit of the mitochondrial membrane respiratory chain NADH dehydrogenase (Complex I) that is believed to belong to the minimal assembly required for catalysis. Complex I functions in the transfer of electrons from NADH to the respiratory chain. The immediate electron acceptor for the enzyme is believed to be ubiquinone. In Drosophila melanogaster (Fruit fly), this protein is NADH-ubiquinone oxidoreductase chain 4L (mt:ND4L).